The sequence spans 501 residues: Bifunctional purine biosynthesis protein PurH (501 aa).

An MGS-like domain is found at 1-144 (MKKRALISVF…KNFKDVVVLS (144 aa)).

Belongs to the PurH family.

The enzyme catalyses (6R)-10-formyltetrahydrofolate + 5-amino-1-(5-phospho-beta-D-ribosyl)imidazole-4-carboxamide = 5-formamido-1-(5-phospho-D-ribosyl)imidazole-4-carboxamide + (6S)-5,6,7,8-tetrahydrofolate. It catalyses the reaction IMP + H2O = 5-formamido-1-(5-phospho-D-ribosyl)imidazole-4-carboxamide. The protein operates within purine metabolism; IMP biosynthesis via de novo pathway; 5-formamido-1-(5-phospho-D-ribosyl)imidazole-4-carboxamide from 5-amino-1-(5-phospho-D-ribosyl)imidazole-4-carboxamide (10-formyl THF route): step 1/1. It functions in the pathway purine metabolism; IMP biosynthesis via de novo pathway; IMP from 5-formamido-1-(5-phospho-D-ribosyl)imidazole-4-carboxamide: step 1/1. This Clostridium perfringens (strain ATCC 13124 / DSM 756 / JCM 1290 / NCIMB 6125 / NCTC 8237 / Type A) protein is Bifunctional purine biosynthesis protein PurH.